Here is a 163-residue protein sequence, read N- to C-terminus: MEPGGVGSSSCVVHQLPCTFPAQPRRQPPLLTACGWVSCSEDYIWPAWPPGFSLPGASDPAPRSAWSALPCPCRTTSSDGPSCHQGMGAPVLTVPAPLMLTNCPREPVLTVFSLEGSCRFKGHEVLKPGAQMGGHWKQELGSVVCHLLSVSSAVCPADLGQQA.

The chain is 18 kDa protein from Mus musculus (Mouse).